A 1212-amino-acid polypeptide reads, in one-letter code: Peregrin (1212 aa).

Residues 21 to 47 form a C2H2-type zinc finger; the sequence is YECPVETCRKVYKSYSGIEYHLYHYDH. 2 disordered regions span residues 43–87 and 118–176; these read YHYD…SPGR and VVSE…PKLP. Basic residues predominate over residues 58 to 67; it reads LRKHKKKGRQ. The interval 59-221 is interaction with KAT6A and KAT6B; that stretch reads RKHKKKGRQS…VEYDMDEEDY (163 aa). The segment covering 74–85 has biased composition (low complexity); sequence QSPSPSEVSQSP. The span at 119 to 130 shows a compositional bias: acidic residues; sequence VSEDEEAPEEAP. The residue at position 120 (serine 120) is a Phosphoserine. Lysine 147 is modified (N6-acetyllysine). The segment covering 148–166 has biased composition (basic residues); that stretch reads SGKHKNKEKRKDSNHHHHS. The residue at position 237 (serine 237) is a Phosphoserine. A PHD-type 1 zinc finger spans residues 272–322; sequence DAVCCICNDGECQNSNVILFCDMCNLAVHQECYGVPYIPEGQWLCRRCLQS. The segment at 326–359 adopts a C2HC pre-PHD-type zinc-finger fold; it reads AVDCALCPNKGGAFKQTDDGRWAHVVCALWIPEV. The PHD-type 2 zinc finger occupies 383–447; that stretch reads LTCYICKQRG…RKTAYCDIHT (65 aa). The disordered stretch occupies residues 447–489; the sequence is TPPGSARRLPALSHSEGEEEEDEEEDEGKSWSSEKVKKAKAKS. Phosphoserine is present on residues serine 459 and serine 461. Over residues 463-473 the composition is skewed to acidic residues; the sequence is GEEEEDEEEDE. The interaction with MEAF6 and ING5 stretch occupies residues 500–819; that stretch reads LAEKRAAAPV…IKKEMTALRR (320 aa). The tract at residues 542–1077 is required for RUNX1 and RUNX2 transcriptional activation; the sequence is YWTLKRQSRN…RGAGWLSEDE (536 aa). Lysine 579 carries the N6-acetyllysine modification. A Bromo domain is found at 627–731; sequence MQLTPFLILL…EQGGAVLRQA (105 aa). Positions 817–1060 are disordered; sequence LRRKLAHQRE…VGTGRGVGHS (244 aa). The span at 823–836 shows a compositional bias: basic and acidic residues; sequence HQRETGRDGPERHG. A Phosphothreonine modification is found at threonine 856. Residues 856–869 are compositionally biased toward low complexity; sequence TDSAAEESSSQETS. Residues serine 858, serine 915, serine 920, and serine 924 each carry the phosphoserine modification. The segment covering 993 to 1019 has biased composition (low complexity); that stretch reads PRSSSDSESSSSSSSSAASDRTSTTPS. Serine 1074 is modified (phosphoserine). The region spanning 1083–1166 is the PWWP domain; the sequence is ALDLVWAKCR…RTKLVPLGVN (84 aa). At serine 1185 the chain carries Phosphoserine.

In terms of assembly, component of some HBO1 complex composed of KAT7/HBO1, MEAF6, ING5, and BRPF1. Component of the MOZ/MORF complex composed at least of ING5, KAT6A, KAT6B, MEAF6 and one of BRPF1, BRD1/BRPF2 and BRPF3. Interacts (via PHD-type zinc finger domains) with unmethylated histone H3 at 'Lys-4' (H3K4me0). Interacts with trimethylated 'Lys-36' of histone H3 (H3K36me3). Interacts with ING5; interaction directs BRPF1 to H4K4me3-enriched chromatin at the 5' of active genes. Interacts with KAT7. Acetylated by KAT6A. In terms of tissue distribution, expressed at low level in most tissues, with high expression in the testis and specific regions of the brain.

The protein localises to the nucleus. Its subcellular location is the chromosome. The protein resides in the cytoplasm. Its function is as follows. Scaffold subunit of various histone acetyltransferase (HAT) complexes, such as the MOZ/MORF and HBO1 complexes, which have a histone H3 acetyltransferase activity. Plays a key role in HBO1 complex by directing KAT7/HBO1 specificity towards histone H3 'Lys-14' acetylation (H3K14ac). Some HAT complexes preferentially mediate histone H3 'Lys-23' (H3K23ac) acetylation. Positively regulates the transcription of RUNX1 and RUNX2. In Mus musculus (Mouse), this protein is Peregrin.